A 420-amino-acid polypeptide reads, in one-letter code: CinA-like protein (420 aa).

This sequence belongs to the CinA family.

The polypeptide is CinA-like protein (Chlorobium phaeobacteroides (strain BS1)).